The following is a 464-amino-acid chain: Argininosuccinate lyase (464 aa).

This sequence belongs to the lyase 1 family. Argininosuccinate lyase subfamily.

The protein localises to the cytoplasm. It catalyses the reaction 2-(N(omega)-L-arginino)succinate = fumarate + L-arginine. Its pathway is amino-acid biosynthesis; L-arginine biosynthesis; L-arginine from L-ornithine and carbamoyl phosphate: step 3/3. The sequence is that of Argininosuccinate lyase from Desulfotalea psychrophila (strain LSv54 / DSM 12343).